A 1247-amino-acid polypeptide reads, in one-letter code: Probable phosphorylase b kinase regulatory subunit alpha (1247 aa).

Residues Leu853 to Leu883 form a calmodulin-binding region. Phosphoserine occurs at positions 1030 and 1033. The tract at residues Asp1052–Ala1089 is calmodulin-binding. A lipid anchor (S-farnesyl cysteine) is attached at Cys1244.

This sequence belongs to the phosphorylase b kinase regulatory chain family. Although the final Cys may be farnesylated, the terminal tripeptide is probably not removed, and the C-terminus is not methylated.

It localises to the cell membrane. Its pathway is glycan biosynthesis; glycogen metabolism. Its function is as follows. Phosphorylase b kinase catalyzes the phosphorylation of serine in certain substrates, including troponin I. The alpha chain may bind calmodulin. This Drosophila melanogaster (Fruit fly) protein is Probable phosphorylase b kinase regulatory subunit alpha.